Consider the following 178-residue polypeptide: MSKAGTKITFFEDKNFQGRHYDSDCDCADFHMYLSRCNSIRVEGGTWAVYERPNFAGYMYILPRGEYPEYQHWMGLNDRLSSCRAVHLSSGGQYKLQIFEKGDFNGQMHETTEDCPSIMEQFHMREVHSCKVLEGAWIFYELPNYRGRQYLLDKKEYRKPVDWGAASPAVQSFRRIVE.

S2 carries the N-acetylserine modification. An N-terminal arm region spans residues 2-5; it reads SKAG. Beta/gamma crystallin 'Greek key' domains follow at residues 6–44 and 45–87; these read TKIT…RVEG and GTWA…RAVH. The segment at 88-93 is connecting peptide; sequence LSSGGQ. 2 consecutive Beta/gamma crystallin 'Greek key' domains span residues 94-134 and 135-177; these read YKLQ…KVLE and GAWI…RRIV.

It belongs to the beta/gamma-crystallin family. As to quaternary structure, monomer.

In terms of biological role, crystallins are the dominant structural components of the vertebrate eye lens. In Bos taurus (Bovine), this protein is Gamma-crystallin S (CRYGS).